The chain runs to 213 residues: Glycerol-3-phosphate acyltransferase (213 aa).

The next 6 helical transmembrane spans lie at 3 to 23, 48 to 68, 71 to 91, 119 to 139, 144 to 164, and 165 to 185; these read IIIL…GLWI, ILGV…GTLA, LPLI…LAVI, PFFL…FSMI, VVAA…GFIL, and TSYD…IIFR.

It belongs to the PlsY family. In terms of assembly, probably interacts with PlsX.

The protein localises to the cell membrane. It carries out the reaction an acyl phosphate + sn-glycerol 3-phosphate = a 1-acyl-sn-glycero-3-phosphate + phosphate. It functions in the pathway lipid metabolism; phospholipid metabolism. Its function is as follows. Catalyzes the transfer of an acyl group from acyl-phosphate (acyl-PO(4)) to glycerol-3-phosphate (G3P) to form lysophosphatidic acid (LPA). This enzyme utilizes acyl-phosphate as fatty acyl donor, but not acyl-CoA or acyl-ACP. This is Glycerol-3-phosphate acyltransferase from Lactococcus lactis subsp. cremoris (strain SK11).